Consider the following 267-residue polypeptide: GTP cyclohydrolase FolE2 (267 aa).

It belongs to the GTP cyclohydrolase IV family.

The catalysed reaction is GTP + H2O = 7,8-dihydroneopterin 3'-triphosphate + formate + H(+). It participates in cofactor biosynthesis; 7,8-dihydroneopterin triphosphate biosynthesis; 7,8-dihydroneopterin triphosphate from GTP: step 1/1. Functionally, converts GTP to 7,8-dihydroneopterin triphosphate. The sequence is that of GTP cyclohydrolase FolE2 from Citrifermentans bemidjiense (strain ATCC BAA-1014 / DSM 16622 / JCM 12645 / Bem) (Geobacter bemidjiensis).